The chain runs to 103 residues: Large ribosomal subunit protein bL21 (103 aa).

It belongs to the bacterial ribosomal protein bL21 family. In terms of assembly, part of the 50S ribosomal subunit. Contacts protein L20.

This protein binds to 23S rRNA in the presence of protein L20. The chain is Large ribosomal subunit protein bL21 from Teredinibacter turnerae (strain ATCC 39867 / T7901).